The chain runs to 316 residues: Ribosomal RNA small subunit methyltransferase H (316 aa).

Residues 32 to 34 (AGH), Asp52, Phe79, Asp106, and Gln113 contribute to the S-adenosyl-L-methionine site.

Belongs to the methyltransferase superfamily. RsmH family.

The protein resides in the cytoplasm. The enzyme catalyses cytidine(1402) in 16S rRNA + S-adenosyl-L-methionine = N(4)-methylcytidine(1402) in 16S rRNA + S-adenosyl-L-homocysteine + H(+). Its function is as follows. Specifically methylates the N4 position of cytidine in position 1402 (C1402) of 16S rRNA. In Paenibacillus sp. (strain JDR-2), this protein is Ribosomal RNA small subunit methyltransferase H.